The chain runs to 148 residues: Large ribosomal subunit protein bL9 (148 aa).

Belongs to the bacterial ribosomal protein bL9 family.

In terms of biological role, binds to the 23S rRNA. In Pseudomonas fluorescens (strain SBW25), this protein is Large ribosomal subunit protein bL9.